We begin with the raw amino-acid sequence, 87 residues long: Keratin-associated protein 19-1 (87 aa).

The segment at Gly-6–Cys-72 is 21 X 2 AA repeats of G-[YCGS].

Belongs to the KRTAP type 19 family. Interacts with hair keratins. In terms of tissue distribution, strong expression in narrowly defined pattern restricted to the lower and middle cortical regions of the hair shaft in both developing and cycling hair. During hair follicle regression (catagen), expression levels decrease until expression is no longer detectable in follicles at resting stage (telogen).

Functionally, in the hair cortex, hair keratin intermediate filaments are embedded in an interfilamentous matrix, consisting of hair keratin-associated proteins (KRTAP), which are essential for the formation of a rigid and resistant hair shaft through their extensive disulfide bond cross-linking with abundant cysteine residues of hair keratins. The matrix proteins include the high-sulfur and high-glycine-tyrosine keratins. The chain is Keratin-associated protein 19-1 (Krtap19-1) from Mus musculus (Mouse).